The primary structure comprises 177 residues: Large ribosomal subunit protein uL6 (177 aa).

It belongs to the universal ribosomal protein uL6 family. In terms of assembly, part of the 50S ribosomal subunit.

In terms of biological role, this protein binds to the 23S rRNA, and is important in its secondary structure. It is located near the subunit interface in the base of the L7/L12 stalk, and near the tRNA binding site of the peptidyltransferase center. This Natronomonas pharaonis (strain ATCC 35678 / DSM 2160 / CIP 103997 / JCM 8858 / NBRC 14720 / NCIMB 2260 / Gabara) (Halobacterium pharaonis) protein is Large ribosomal subunit protein uL6.